The chain runs to 66 residues: Large ribosomal subunit protein uL29 (66 aa).

This sequence belongs to the universal ribosomal protein uL29 family.

This Chelativorans sp. (strain BNC1) protein is Large ribosomal subunit protein uL29.